The sequence spans 353 residues: 2,4-diaminopentanoate dehydrogenase (353 aa).

This sequence belongs to the DapB family. As to quaternary structure, homodimer.

The catalysed reaction is (2R,4S)-2,4-diaminopentanoate + NAD(+) + H2O = (2R)-2-amino-4-oxopentanoate + NH4(+) + NADH + H(+). It catalyses the reaction (2R,4S)-2,4-diaminopentanoate + NADP(+) + H2O = (2R)-2-amino-4-oxopentanoate + NH4(+) + NADPH + H(+). Its activity is regulated as follows. Inhibited by p-chloromercuribenzoate, iodoacetate and N-ethylmaleimide. In terms of biological role, involved in the ornithine fermentation pathway. Catalyzes the oxidative deamination of (2R,4S)-2,4-diaminopentanoate (DAP) to yield 2-amino-4-ketopentanoate (AKP). The chain is 2,4-diaminopentanoate dehydrogenase from Acetoanaerobium sticklandii (strain ATCC 12662 / DSM 519 / JCM 1433 / CCUG 9281 / NCIMB 10654 / HF) (Clostridium sticklandii).